The sequence spans 280 residues: Merozoite surface protein 2 (280 aa).

An N-terminal signal peptide occupies residues 1 to 20 (MKVIKTLSIINFFIFVTFNI). 2 N-linked (GlcNAc...) asparagine glycosylation sites follow: Asn-22 and Asn-36. A polymorphic region region spans residues 44–206 (ANEGSNTKSV…PQTAENENPA (163 aa)). The interval 47 to 242 (GSNTKSVGAN…SQKECTDGNK (196 aa)) is disordered. Positions 51-74 (KSVGANAPKADTIASGSQSSTNSA) are 5 X 12 AA tandem repeats of P-P-I-T-T-T-E-S-N-S-R-S. Residues 64 to 98 (ASGSQSSTNSASTSTTNNGESQTTTPTAADTPTAT) are compositionally biased toward low complexity. Over residues 99–149 (ESNSRSPPITTTESNSRSPPITTTESNSRSPPITTTESNSRSPPITTTESN) the composition is skewed to polar residues. A run of 4 repeats spans residues 105–116 (PPITTTESNSRS), 117–128 (PPITTTESNSRS), 129–140 (PPITTTESNSRS), and 141–152 (PPITTTESNSRS). Low complexity predominate over residues 150–163 (SRSPPITTTESSSS). The 5; partial repeat unit spans residues 153 to 160 (PPITTTES). Residue Asn-168 is glycosylated (N-linked (GlcNAc...) asparagine). A compositionally biased stretch (basic and acidic residues) spans 170–182 (TDGKGEESEKQNE). N-linked (GlcNAc...) asparagine glycans are attached at residues Asn-184 and Asn-229. The span at 233-242 (SQKECTDGNK) shows a compositional bias: basic and acidic residues. A disulfide bridge links Cys-237 with Cys-245. Asn-253 and Asn-254 each carry an N-linked (GlcNAc...) asparagine glycan. Asn-254 carries GPI-anchor amidated asparagine lipidation. The propeptide at 255 to 280 (SSNIASINKFVVLISATLVLSFAIFI) is removed in mature form.

The protein localises to the cell membrane. Its function is as follows. May play a role in the merozoite attachment to the erythrocyte. The sequence is that of Merozoite surface protein 2 from Plasmodium falciparum (isolate K1 / Thailand).